The following is a 601-amino-acid chain: Multidrug and toxin extrusion protein 2 (601 aa).

At Met-1 to Ala-62 the chain is on the cytoplasmic side. Residues Leu-63–Val-83 traverse the membrane as a helical segment. Topologically, residues Gly-84–Glu-95 are extracellular. The helical transmembrane segment at Leu-96 to Gly-116 threads the bilayer. At Leu-117 to Ser-145 the chain is on the cytoplasmic side. The chain crosses the membrane as a helical span at residues Leu-146–Leu-166. Over Leu-167 to Tyr-182 the chain is Extracellular. Residues Ala-183–Leu-203 form a helical membrane-spanning segment. Residues Gln-204 to Gln-212 are Cytoplasmic-facing. Residues Val-213 to Val-233 form a helical membrane-spanning segment. Over Leu-234–Ser-241 the chain is Extracellular. A helical transmembrane segment spans residues Ala-242–Leu-262. Residues Lys-263–Trp-281 lie on the Cytoplasmic side of the membrane. Residues Gly-282–Ala-301 form a helical membrane-spanning segment. Residues Tyr-302 to Gln-320 are Extracellular-facing. The helical transmembrane segment at Ala-321 to Val-341 threads the bilayer. Residues Cys-342–Ala-361 are Cytoplasmic-facing. Residues Val-362 to Leu-382 form a helical membrane-spanning segment. Over Asn-383 to Gln-402 the chain is Extracellular. A helical membrane pass occupies residues Val-403–Val-423. The Cytoplasmic segment spans residues Leu-424–Asn-437. Residues Ala-438–Met-458 traverse the membrane as a helical segment. A topological domain (extracellular) is located at residue Arg-459. The helical transmembrane segment at Ile-460 to Val-480 threads the bilayer. At Tyr-481–Arg-577 the chain is on the cytoplasmic side. A helical membrane pass occupies residues Gly-578–Thr-598. At Thr-599–Tyr-601 the chain is on the extracellular side.

The protein belongs to the multi antimicrobial extrusion (MATE) (TC 2.A.66.1) family. Expressed in renal cortical tissues.

It localises to the cell membrane. It is found in the apical cell membrane. The catalysed reaction is thiamine(out) + H(+)(in) = thiamine(in) + H(+)(out). It carries out the reaction estrone 3-sulfate(in) + H(+)(out) = estrone 3-sulfate(out) + H(+)(in). It catalyses the reaction creatinine(in) + H(+)(out) = creatinine(out) + H(+)(in). In terms of biological role, multidrug efflux pump that functions as a H(+)/organic cation antiporter. Mediates the efflux of cationic compounds, such as the model cations, tetraethylammonium (TEA) and 1-methyl-4-phenylpyridinium (MPP+), the platinum-based drug oxaliplatin or weak bases that are positively charged at physiological pH, cimetidine or the antidiabetic drug metformin. Mediates the efflux of the endogenous compounds creatinine, thiamine and estrone-3-sulfate. Plays a physiological role in the excretion of drugs, toxins and endogenous metabolites through the kidney. This Oryctolagus cuniculus (Rabbit) protein is Multidrug and toxin extrusion protein 2 (SLC47A2).